Consider the following 951-residue polypeptide: Protocadherin-20 (951 aa).

Positions 1–60 are cleaved as a signal peptide; sequence MRGRGNARSSQALGVSWCPATWHPRLDMGRLHRPRSSTSYRNLPHLFLFFLFVGPFSCLG. Over 61-890 the chain is Extracellular; sequence SYSRATELLY…VESVSCMPTL (830 aa). 6 consecutive Cadherin domains span residues 64-209, 210-320, 321-535, 536-639, 640-742, and 746-863; these read RATE…APQF, PVSQ…CPLF, TDSQ…APIF, LQPL…SPRF, INKD…PPLV, and QSNM…EPEI. N-linked (GlcNAc...) asparagine glycosylation occurs at Asn135. Asn326 and Asn332 each carry an N-linked (GlcNAc...) asparagine glycan. Residues Asn680, Asn748, Asn803, Asn844, and Asn849 are each glycosylated (N-linked (GlcNAc...) asparagine). The chain crosses the membrane as a helical span at residues 891–911; it reads VALSVISLGSITLVTGMGIYI. Over 912-951 the chain is Cytoplasmic; it reads CLRKGEKHPREDENLEVQIPLKGKIDLHMRERKPMDISNI.

It localises to the cell membrane. Functionally, potential calcium-dependent cell-adhesion protein. The chain is Protocadherin-20 (PCDH20) from Homo sapiens (Human).